We begin with the raw amino-acid sequence, 415 residues long: Serine hydroxymethyltransferase (415 aa).

(6S)-5,6,7,8-tetrahydrofolate-binding positions include L122 and 126 to 128; that span reads GHL. Residue K230 is modified to N6-(pyridoxal phosphate)lysine.

The protein belongs to the SHMT family. In terms of assembly, homodimer. Pyridoxal 5'-phosphate is required as a cofactor.

Its subcellular location is the cytoplasm. It catalyses the reaction (6R)-5,10-methylene-5,6,7,8-tetrahydrofolate + glycine + H2O = (6S)-5,6,7,8-tetrahydrofolate + L-serine. It functions in the pathway one-carbon metabolism; tetrahydrofolate interconversion. The protein operates within amino-acid biosynthesis; glycine biosynthesis; glycine from L-serine: step 1/1. Its function is as follows. Catalyzes the reversible interconversion of serine and glycine with tetrahydrofolate (THF) serving as the one-carbon carrier. This reaction serves as the major source of one-carbon groups required for the biosynthesis of purines, thymidylate, methionine, and other important biomolecules. Also exhibits THF-independent aldolase activity toward beta-hydroxyamino acids, producing glycine and aldehydes, via a retro-aldol mechanism. The polypeptide is Serine hydroxymethyltransferase (Leptothrix cholodnii (strain ATCC 51168 / LMG 8142 / SP-6) (Leptothrix discophora (strain SP-6))).